Consider the following 241-residue polypeptide: Transforming protein p29 (241 aa).

Residues M1 to A41 form a disordered region. Residues C233 and C236 are each lipidated (S-palmitoyl cysteine; by host). Position 238 is a cysteine methyl ester; by host (C238). C238 carries S-farnesyl cysteine; by host lipidation. Positions V239–S241 are cleaved as a propeptide — removed in mature form.

This sequence belongs to the small GTPase superfamily. Ras family.

Its subcellular location is the host cell membrane. The catalysed reaction is GTP + H2O = GDP + phosphate + H(+). With respect to regulation, alternates between an inactive form bound to GDP and an active form bound to GTP. Activated by a guanine nucleotide-exchange factor (GEF) and inactivated by a GTPase-activating protein (GAP). The polypeptide is Transforming protein p29 (H-RAS) (Mus musculus (Mouse)).